We begin with the raw amino-acid sequence, 132 residues long: Small ribosomal subunit protein uS8 (132 aa).

It belongs to the universal ribosomal protein uS8 family. As to quaternary structure, part of the 30S ribosomal subunit. Contacts proteins S5 and S12.

Its function is as follows. One of the primary rRNA binding proteins, it binds directly to 16S rRNA central domain where it helps coordinate assembly of the platform of the 30S subunit. This Flavobacterium johnsoniae (strain ATCC 17061 / DSM 2064 / JCM 8514 / BCRC 14874 / CCUG 350202 / NBRC 14942 / NCIMB 11054 / UW101) (Cytophaga johnsonae) protein is Small ribosomal subunit protein uS8.